Here is a 211-residue protein sequence, read N- to C-terminus: Probable GTP-binding protein EngB (211 aa).

Positions 26 to 200 constitute an EngB-type G domain; sequence SGIEVAFAGR…RQKLDNWFST (175 aa). Residues 34–41, 61–65, 79–82, 146–149, and 179–181 each bind GTP; these read GRSNAGKS, GRTQL, DLPG, TKAD, and FSS. Mg(2+) is bound by residues Ser41 and Thr63.

The protein belongs to the TRAFAC class TrmE-Era-EngA-EngB-Septin-like GTPase superfamily. EngB GTPase family. Mg(2+) is required as a cofactor.

Necessary for normal cell division and for the maintenance of normal septation. The polypeptide is Probable GTP-binding protein EngB (Pectobacterium carotovorum subsp. carotovorum (strain PC1)).